The primary structure comprises 513 residues: Galactose-1-phosphate uridylyltransferase (513 aa).

This sequence belongs to the galactose-1-phosphate uridylyltransferase type 2 family.

Its subcellular location is the cytoplasm. The catalysed reaction is alpha-D-galactose 1-phosphate + UDP-alpha-D-glucose = alpha-D-glucose 1-phosphate + UDP-alpha-D-galactose. Its pathway is carbohydrate metabolism; galactose metabolism. This Bacillus subtilis (strain 168) protein is Galactose-1-phosphate uridylyltransferase (galT).